Reading from the N-terminus, the 427-residue chain is Gamma-glutamyl phosphate reductase (427 aa).

The protein belongs to the gamma-glutamyl phosphate reductase family.

It is found in the cytoplasm. It carries out the reaction L-glutamate 5-semialdehyde + phosphate + NADP(+) = L-glutamyl 5-phosphate + NADPH + H(+). Its pathway is amino-acid biosynthesis; L-proline biosynthesis; L-glutamate 5-semialdehyde from L-glutamate: step 2/2. Its function is as follows. Catalyzes the NADPH-dependent reduction of L-glutamate 5-phosphate into L-glutamate 5-semialdehyde and phosphate. The product spontaneously undergoes cyclization to form 1-pyrroline-5-carboxylate. The chain is Gamma-glutamyl phosphate reductase from Rhodospirillum rubrum (strain ATCC 11170 / ATH 1.1.1 / DSM 467 / LMG 4362 / NCIMB 8255 / S1).